The following is a 382-amino-acid chain: F-box/kelch-repeat protein At3g16580 (382 aa).

In terms of domain architecture, F-box spans Trp-9–His-55. Kelch repeat units follow at residues Lys-150–Thr-196 and Trp-334–Gln-381.

The polypeptide is F-box/kelch-repeat protein At3g16580 (Arabidopsis thaliana (Mouse-ear cress)).